A 130-amino-acid chain; its full sequence is Small ribosomal subunit protein uS8 (130 aa).

The protein belongs to the universal ribosomal protein uS8 family. Part of the 30S ribosomal subunit. Contacts proteins S5 and S12.

One of the primary rRNA binding proteins, it binds directly to 16S rRNA central domain where it helps coordinate assembly of the platform of the 30S subunit. This Sodalis glossinidius (strain morsitans) protein is Small ribosomal subunit protein uS8.